Here is a 425-residue protein sequence, read N- to C-terminus: Phosphomethylpyrimidine synthase (425 aa).

Substrate is bound by residues asparagine 66, methionine 95, tyrosine 124, histidine 159, 181–183, 222–225, and glutamate 261; these read SRG and DAYR. Histidine 265 provides a ligand contact to Zn(2+). Tyrosine 288 serves as a coordination point for substrate. Histidine 329 provides a ligand contact to Zn(2+). [4Fe-4S] cluster is bound by residues cysteine 406, cysteine 409, and cysteine 413.

The protein belongs to the ThiC family. The cofactor is [4Fe-4S] cluster.

The catalysed reaction is 5-amino-1-(5-phospho-beta-D-ribosyl)imidazole + S-adenosyl-L-methionine = 4-amino-2-methyl-5-(phosphooxymethyl)pyrimidine + CO + 5'-deoxyadenosine + formate + L-methionine + 3 H(+). It functions in the pathway cofactor biosynthesis; thiamine diphosphate biosynthesis. Catalyzes the synthesis of the hydroxymethylpyrimidine phosphate (HMP-P) moiety of thiamine from aminoimidazole ribotide (AIR) in a radical S-adenosyl-L-methionine (SAM)-dependent reaction. This is Phosphomethylpyrimidine synthase from Archaeoglobus fulgidus (strain ATCC 49558 / DSM 4304 / JCM 9628 / NBRC 100126 / VC-16).